A 78-amino-acid chain; its full sequence is UPF0291 protein SE_1024 (78 aa).

The disordered stretch occupies residues 53–78; the sequence is TKVIDPEGNDVTPEKLKKIQEEKHNK. A compositionally biased stretch (basic and acidic residues) spans 64–78; it reads TPEKLKKIQEEKHNK.

The protein belongs to the UPF0291 family.

Its subcellular location is the cytoplasm. This is UPF0291 protein SE_1024 from Staphylococcus epidermidis (strain ATCC 12228 / FDA PCI 1200).